Here is a 361-residue protein sequence, read N- to C-terminus: MKESVVRKLEHLVERFEEVQALLGDPEVIGDQDKFRNLSKEFSQLEDVVAGFNAYQQAQENLASAQEMLNEDDAEMREMAQEEMKEAKGEIERLETELQVLLLPKDPNDDNNCFLEIRAGAGGDEAAIFAGDLFRMYSRYAESRGWRVELVNANESEHGGYKEVVANVSGDGVYGVLKFESGGHRVQRVPETESQGRIHTSACTVAVLPEIPESEAIEINPAELRIDTFRASGAGGQHVNKTDSAIRITHLPTGLVVECQDERSQHKNRAKAMSVLQARLNQIEEEKRAAEEASTRKSLVGSGDRSERIRTYNFPQGRVTDHRINLTIYRLDEVVEGDLKQLVDPILQEHQADLLASLSDE.

Position 237 is an N5-methylglutamine (Gln-237). Positions 287–306 are disordered; that stretch reads KRAAEEASTRKSLVGSGDRS.

Belongs to the prokaryotic/mitochondrial release factor family. Methylated by PrmC. Methylation increases the termination efficiency of RF1.

The protein resides in the cytoplasm. Peptide chain release factor 1 directs the termination of translation in response to the peptide chain termination codons UAG and UAA. The sequence is that of Peptide chain release factor 1 from Alteromonas mediterranea (strain DSM 17117 / CIP 110805 / LMG 28347 / Deep ecotype).